Here is a 417-residue protein sequence, read N- to C-terminus: Serine hydroxymethyltransferase (417 aa).

(6S)-5,6,7,8-tetrahydrofolate contacts are provided by residues leucine 121 and 125-127 (GHL). An N6-(pyridoxal phosphate)lysine modification is found at lysine 229. Residue 355 to 357 (SPF) coordinates (6S)-5,6,7,8-tetrahydrofolate.

It belongs to the SHMT family. Homodimer. Pyridoxal 5'-phosphate serves as cofactor.

It localises to the cytoplasm. The enzyme catalyses (6R)-5,10-methylene-5,6,7,8-tetrahydrofolate + glycine + H2O = (6S)-5,6,7,8-tetrahydrofolate + L-serine. The protein operates within one-carbon metabolism; tetrahydrofolate interconversion. Its pathway is amino-acid biosynthesis; glycine biosynthesis; glycine from L-serine: step 1/1. In terms of biological role, catalyzes the reversible interconversion of serine and glycine with tetrahydrofolate (THF) serving as the one-carbon carrier. This reaction serves as the major source of one-carbon groups required for the biosynthesis of purines, thymidylate, methionine, and other important biomolecules. Also exhibits THF-independent aldolase activity toward beta-hydroxyamino acids, producing glycine and aldehydes, via a retro-aldol mechanism. This Enterobacter sp. (strain 638) protein is Serine hydroxymethyltransferase.